The sequence spans 256 residues: ATP synthase subunit a (256 aa).

6 helical membrane passes run I33–L53, Y92–I112, M122–Y142, F148–I168, G191–V211, and M235–L255.

The protein belongs to the ATPase A chain family. As to quaternary structure, F-type ATPases have 2 components, CF(1) - the catalytic core - and CF(0) - the membrane proton channel. CF(1) has five subunits: alpha(3), beta(3), gamma(1), delta(1), epsilon(1). CF(0) has three main subunits: a, b and c.

It localises to the mitochondrion inner membrane. In terms of biological role, mitochondrial membrane ATP synthase (F(1)F(0) ATP synthase or Complex V) produces ATP from ADP in the presence of a proton gradient across the membrane which is generated by electron transport complexes of the respiratory chain. F-type ATPases consist of two structural domains, F(1) - containing the extramembraneous catalytic core and F(0) - containing the membrane proton channel, linked together by a central stalk and a peripheral stalk. During catalysis, ATP synthesis in the catalytic domain of F(1) is coupled via a rotary mechanism of the central stalk subunits to proton translocation. Key component of the proton channel; it may play a direct role in the translocation of protons across the membrane. The protein is ATP synthase subunit a (ATP6) of Wickerhamomyces canadensis (Yeast).